The chain runs to 255 residues: Hydroxyacylglutathione hydrolase (255 aa).

Zn(2+)-binding residues include His59, His61, Asp63, His64, His118, Asp144, and His182.

It belongs to the metallo-beta-lactamase superfamily. Glyoxalase II family. As to quaternary structure, monomer. Zn(2+) is required as a cofactor.

It carries out the reaction an S-(2-hydroxyacyl)glutathione + H2O = a 2-hydroxy carboxylate + glutathione + H(+). It functions in the pathway secondary metabolite metabolism; methylglyoxal degradation; (R)-lactate from methylglyoxal: step 2/2. Functionally, thiolesterase that catalyzes the hydrolysis of S-D-lactoyl-glutathione to form glutathione and D-lactic acid. This chain is Hydroxyacylglutathione hydrolase, found in Synechococcus sp. (strain WH7803).